Consider the following 353-residue polypeptide: Ferredoxin--NADP reductase (353 aa).

8 residues coordinate FAD: Thr-25, Glu-44, Gln-52, Tyr-57, Val-97, Phe-132, Asp-298, and Ser-339.

This sequence belongs to the ferredoxin--NADP reductase type 2 family. In terms of assembly, homodimer. FAD serves as cofactor.

It catalyses the reaction 2 reduced [2Fe-2S]-[ferredoxin] + NADP(+) + H(+) = 2 oxidized [2Fe-2S]-[ferredoxin] + NADPH. This Chlorobium chlorochromatii (strain CaD3) protein is Ferredoxin--NADP reductase.